Reading from the N-terminus, the 238-residue chain is MSDVTTAEFNEDGKYIRKIRSFVLREGRLTKGQSQAIEAHWPAMGLDYTPQALELTQVFGRDADTVLEIGFGMGASLVQMAKAAPEQNFIGIEVHKPGIGTCLSEAGAAEVTNLRVYHHDAMEVLEHSIVDGSLERVQLFFPDPWHKKRHHKRRIVQAEFVQLIRRKLKIGGVFHMATDWENYSEHMLEIMNAAEGYKNQSTTGTVVERPEHRPLTKFEARGHRLGHGVWDIMFERTA.

Residues E68, E93, D120, and D143 each contribute to the S-adenosyl-L-methionine site. The active site involves D143. Substrate contacts are provided by residues K147, D179, and T216–E219.

This sequence belongs to the class I-like SAM-binding methyltransferase superfamily. TrmB family.

The catalysed reaction is guanosine(46) in tRNA + S-adenosyl-L-methionine = N(7)-methylguanosine(46) in tRNA + S-adenosyl-L-homocysteine. Its pathway is tRNA modification; N(7)-methylguanine-tRNA biosynthesis. Its function is as follows. Catalyzes the formation of N(7)-methylguanine at position 46 (m7G46) in tRNA. The sequence is that of tRNA (guanine-N(7)-)-methyltransferase from Shewanella frigidimarina (strain NCIMB 400).